Here is a 147-residue protein sequence, read N- to C-terminus: Hemoglobin subunit epsilon-4 (147 aa).

In terms of domain architecture, Globin spans 3–147 (HFTTEEKAAV…VANALAHKYH (145 aa)). Residues His64 and His93 each coordinate heme b.

Belongs to the globin family. As to expression, red blood cells.

In terms of biological role, hemoglobin epsilon chain is a beta-type chain found in early embryos. This Bos taurus (Bovine) protein is Hemoglobin subunit epsilon-4 (HBE4).